The primary structure comprises 113 residues: U11-theraphotoxin-Hhn1a (113 aa).

An N-terminal signal peptide occupies residues 1 to 21 (MNTVRVTFLLVFVLAVSLGRA). A propeptide spanning residues 22 to 74 (DKDENRMEMQEKTEQGKSYLDFAENLLLQKLEELEAKLLEEDSEESRNSRQKR) is cleaved from the precursor. Intrachain disulfides connect cysteine 75–cysteine 90, cysteine 82–cysteine 95, and cysteine 89–cysteine 110.

The protein belongs to the neurotoxin 14 (magi-1) family. 01 (HNTX-16) subfamily. Expressed by the venom gland.

The protein localises to the secreted. Its function is as follows. Probable ion channel inhibitor. This Cyriopagopus hainanus (Chinese bird spider) protein is U11-theraphotoxin-Hhn1a.